The chain runs to 938 residues: GGISVPGPMGPSGPRGLPGPPGAPGPQGFQGPPGEPGEPGASGPMGPRGPPGPPGKNGDDGEAGKPGRPGERGPPGPQGARGLPGTAGLPGMKGHRGFSGLDGAKGDAGPAGPKGRPGASGPAGARGNDGATGAAGPPGPTGPAGPPGFPGAVGAKGEAGPQGARGSEGPQGVRGEPGPPGPAGAAGPAGNPGADGQPGAKGANGAPGIAGAPGFPGARGPSGPQGPSGPPGPKGNSGEPGAPGNKGDTGAKGEPGPTGIQGPPGPAGEEGKRGARGEPGPTGLPGPPGERGGPGSRGFPGADGVAGPKERGSPGPAGPKGSPGEAGRPGEAGLPGAKGLTGSPGSPGPDGKTGPPGPAGQDGRPGPPGPPGARGQAGVMGFPGPKGAAGEPGKAGERGVPGPPGAVGPAGKDGEAGAQGPPGPAGPAGERGEQGPAGPGFQGLPGPAGPPGGEQGVPGDLGAPGPSGARGERGFPGERGVQGPPGPAGPRGSNGAPGSQGAPGLQGMPGERGAAGLPGPKGDRGDAGPKGADGAPGKDGVRGLTGPIGPPGPAGAPGDKGESGPSGPAGPTGARGAPGDRGEPGPPGPAGFAGPPGADGQPGAKGEPGDAGAKGDAGPPGPAGPTGPPGPIGNVGAPGPKGARGSAGPPGATGFPGAAGRVGPPGPSGNAGPPGPPGPVGKEGGETGPAGRPGEVGPPGGSPGADGPAGAPGTPGPQGISGQRGVVGLPGQRGERGFPGLPGPSGEPGKQGPSGSSGERGPPGPMGPPGLAGPPGESGREGAPGAEGSPGRDGSPGPKGDRGETGPGPPGAPGAPGAPGPVGPAGKNGDRGETGPAGPAGPAGPAGARGPAGPQGPRRGFSGLQGPAGPPGSPGEQGPSGASGPAGPRGPPGSAGSPGKDGLNGLPGPIGPPGPRTGDAGPVGPPGPPGPPGPPGPP.

A disordered region spans residues 1–938 (GGISVPGPMG…PGPPGPPGPP (938 aa)). 4-hydroxyproline is present on residues P18, P21, P24, P33, P36, P39, P54, P69, P75, P84, and P90. The segment covering 26–45 (PQGFQGPPGEPGEPGASGPM) has biased composition (low complexity). The span at 57–71 (NGDDGEAGKPGRPGE) shows a compositional bias: basic and acidic residues. K93 bears the 5-hydroxylysine; alternate mark. Residue K93 is glycosylated (O-linked (Gal...) hydroxylysine; alternate). A Phosphoserine modification is found at S99. Positions 107-135 (DAGPAGPKGRPGASGPAGARGNDGATGAA) are enriched in low complexity. A 4-hydroxyproline mark is found at P117, P138, P147, P150, P177, P180, P192, P198, P207, P213, P216, and P231. Residues 137–149 (PPGPTGPAGPPGF) show a composition bias toward pro residues. Positions 183–222 (AGAAGPAGNPGADGQPGAKGANGAPGIAGAPGFPGARGPS) are enriched in low complexity. K234 bears the 5-hydroxylysine mark. P240, P243, P255, P264, P279, P285, P294, and P300 each carry 4-hydroxyproline. Residues 289–298 (GERGGPGSRG) show a composition bias toward gly residues. K309 is subject to 5-hydroxylysine. 4-hydroxyproline occurs at positions 314, 323, 329, 335, 344, 347, 356, 365, 371, 383, 392, 401, 404, 422, 439, 445, 451, 458, 464, 476, 485, 497, 503, 509, and 518. Positions 338–364 (KGLTGSPGSPGPDGKTGPPGPAGQDGR) are enriched in low complexity. Residues 373–392 (ARGQAGVMGFPGPKGAAGEP) are compositionally biased toward low complexity. K530 carries the post-translational modification 5-hydroxylysine. 4-hydroxyproline is present on residues P536, P551, and P557. Low complexity predominate over residues 563 to 577 (SGPSGPAGPTGARGA). Residue S566 is modified to Phosphoserine. 8 positions are modified to 4-hydroxyproline: P578, P584, P587, P596, P602, P620, P629, and P638. Over residues 590–617 (AGFAGPPGADGQPGAKGEPGDAGAKGDA) the composition is skewed to low complexity. Positions 619–631 (PPGPAGPTGPPGP) are enriched in pro residues. K641 carries the 5-hydroxylysine modification. Over residues 646–662 (SAGPPGATGFPGAAGRV) the composition is skewed to low complexity. Residues P650 and P656 each carry the 4-hydroxyproline modification. At P664 the chain carries 3-hydroxyproline. 15 positions are modified to 4-hydroxyproline: P665, P674, P677, P693, P703, P712, P730, P739, P742, P748, P763, P769, P775, P784, and P790. Over residues 762–772 (PPGPMGPPGLA) the composition is skewed to pro residues. At K799 the chain carries 5-hydroxylysine. Over residues 807 to 822 (PGPPGAPGAPGAPGPV) the composition is skewed to pro residues. 4-hydroxyproline occurs at positions 810, 813, and 816. Residues 843–867 (AGPAGARGPAGPQGPRRGFSGLQGP) show a composition bias toward low complexity. A 4-hydroxyproline mark is found at P871, P874, P892, and P907. The segment covering 874-907 (PGEQGPSGASGPAGPRGPPGSAGSPGKDGLNGLP) has biased composition (low complexity). 3-hydroxyproline is present on P912. The residue at position 913 (P913) is a 4-hydroxyproline. Positions 923 to 938 (VGPPGPPGPPGPPGPP) are enriched in pro residues. A 3-hydroxyproline modification is found at P925. P926 carries the 4-hydroxyproline modification. P928 is modified (3-hydroxyproline). P929 bears the 4-hydroxyproline mark. 3-hydroxyproline is present on P931. 3 positions are modified to 4-hydroxyproline: P932, P935, and P938.

This sequence belongs to the fibrillar collagen family. As to quaternary structure, trimers of one alpha 2(I) and two alpha 1(I) chains. Contains mostly 4-hydroxyproline. Proline residues at the third position of the tripeptide repeating unit (G-X-Y) are hydroxylated in some or all of the chains. In terms of processing, contains 3-hydroxyproline at a few sites. This modification occurs on the first proline residue in the sequence motif Gly-Pro-Hyp, where Hyp is 4-hydroxyproline. Post-translationally, lysine residues at the third position of the tripeptide repeating unit (G-X-Y) are 5-hydroxylated in some or all of the chains. O-glycosylated on hydroxylated lysine residues. The O-linked glycan consists of a Glc-Gal disaccharide. In terms of tissue distribution, expressed in bones.

It localises to the secreted. It is found in the extracellular space. The protein resides in the extracellular matrix. Its function is as follows. Type I collagen is a member of group I collagen (fibrillar forming collagen). This chain is Collagen alpha-1(I) chain, found in Megalonyx jeffersonii (Jefferson's ground sloth).